A 930-amino-acid chain; its full sequence is Zn(2)-C6 fungal-type transcription factor FTF1c (930 aa).

Residues 137–164 constitute a DNA-binding region (zn(2)-C6 fungal-type); that stretch reads CIACRRKKIRCSGEKPACEHCLCSYIPC.

The protein localises to the nucleus. Functionally, zn(2)-C6 fungal-type transcription factor that has a role in the establishment of the fungus within the plant and/or the progress of the disease. Regulates the expression of virulence factors such as SIX1 and SIX6. The sequence is that of Zn(2)-C6 fungal-type transcription factor FTF1c from Fusarium oxysporum f. sp. lycopersici (strain 4287 / CBS 123668 / FGSC 9935 / NRRL 34936) (Fusarium vascular wilt of tomato).